The primary structure comprises 156 residues: 6,7-dimethyl-8-ribityllumazine synthase (156 aa).

Residues F22, 56-58 (AFE), and 80-82 (VVI) contribute to the 5-amino-6-(D-ribitylamino)uracil site. 85–86 (ST) is a binding site for (2S)-2-hydroxy-3-oxobutyl phosphate. H88 (proton donor) is an active-site residue. F113 contributes to the 5-amino-6-(D-ribitylamino)uracil binding site. R127 serves as a coordination point for (2S)-2-hydroxy-3-oxobutyl phosphate.

This sequence belongs to the DMRL synthase family.

It catalyses the reaction (2S)-2-hydroxy-3-oxobutyl phosphate + 5-amino-6-(D-ribitylamino)uracil = 6,7-dimethyl-8-(1-D-ribityl)lumazine + phosphate + 2 H2O + H(+). It functions in the pathway cofactor biosynthesis; riboflavin biosynthesis; riboflavin from 2-hydroxy-3-oxobutyl phosphate and 5-amino-6-(D-ribitylamino)uracil: step 1/2. Its function is as follows. Catalyzes the formation of 6,7-dimethyl-8-ribityllumazine by condensation of 5-amino-6-(D-ribitylamino)uracil with 3,4-dihydroxy-2-butanone 4-phosphate. This is the penultimate step in the biosynthesis of riboflavin. This chain is 6,7-dimethyl-8-ribityllumazine synthase, found in Streptococcus agalactiae serotype Ia (strain ATCC 27591 / A909 / CDC SS700).